Consider the following 66-residue polypeptide: Small ribosomal subunit protein eS27 (66 aa).

Zn(2+)-binding residues include Cys-21, Cys-24, Cys-40, and Cys-43. Residues 21-43 (CPNCGNEQTIFSHATFPVRCLSC) form a C4-type zinc finger.

It belongs to the eukaryotic ribosomal protein eS27 family. As to quaternary structure, part of the 30S ribosomal subunit. It depends on Zn(2+) as a cofactor.

In Saccharolobus solfataricus (strain ATCC 35092 / DSM 1617 / JCM 11322 / P2) (Sulfolobus solfataricus), this protein is Small ribosomal subunit protein eS27.